The following is a 745-amino-acid chain: F-box only protein 30 (745 aa).

Residues 48–109 (EHRLLCPFER…SYADRKSYEN (62 aa)) form a TRAF-type zinc finger. 2 disordered regions span residues 211–231 (NTSVPNDMDEQQNARESLEDQ) and 305–324 (GDSKQSNLTNGDCVASSDGT). The segment covering 222–231 (QNARESLEDQ) has biased composition (basic and acidic residues). Polar residues predominate over residues 305–314 (GDSKQSNLTN). Residues 610–658 (NDHLSSLPFEVLQHIAGFLDGFSLCQLSCVSKLMRDVCGSLLQSRGMVI) enclose the F-box domain.

Part of a SCF (SKP1-cullin-F-box) protein ligase complex. Interacts with SKP1, CUL1 and RBX1/ROC1. Auto-ubiquitinated. Post-translationally, may be neddylated. Neddylation may be required for E3 ligase activity.

It participates in protein modification; protein ubiquitination. In terms of biological role, substrate-recognition component of the SCF (SKP1-CUL1-F-box protein)-type E3 ubiquitin ligase complex. Required for muscle atrophy following denervation. This is F-box only protein 30 (FBXO30) from Homo sapiens (Human).